Reading from the N-terminus, the 87-residue chain is UPF0147 protein AF_2370.1 (87 aa).

It belongs to the UPF0147 family.

The polypeptide is UPF0147 protein AF_2370.1 (Archaeoglobus fulgidus (strain ATCC 49558 / DSM 4304 / JCM 9628 / NBRC 100126 / VC-16)).